The primary structure comprises 276 residues: Large ribosomal subunit protein uL2 (276 aa).

The segment at 219-276 (TVRGSVMNPNDHPHGGGEGRSPIGRPSPVTPWGKPALGYKTRKKNKASNKLIVSRRTK) is disordered. Positions 258–276 (KTRKKNKASNKLIVSRRTK) are enriched in basic residues.

Belongs to the universal ribosomal protein uL2 family. Part of the 50S ribosomal subunit. Forms a bridge to the 30S subunit in the 70S ribosome.

One of the primary rRNA binding proteins. Required for association of the 30S and 50S subunits to form the 70S ribosome, for tRNA binding and peptide bond formation. It has been suggested to have peptidyltransferase activity; this is somewhat controversial. Makes several contacts with the 16S rRNA in the 70S ribosome. This Clostridioides difficile (strain 630) (Peptoclostridium difficile) protein is Large ribosomal subunit protein uL2.